The sequence spans 710 residues: FAST kinase domain-containing protein 2, mitochondrial (710 aa).

Phosphoserine occurs at positions 126 and 140. An RAP domain is found at 634 to 691; sequence VAVLCVSRSAYCLGSSHPRGFLAMKMRHLNAMGFHVILVNNWEMDKLEMEDAVTFLKT. A Phosphoserine modification is found at S708.

It belongs to the FAST kinase family. In terms of assembly, monomer. Found in a complex with GRSF1, DDX28, DHX30 and FASTKD5. Associates with the 16S mitochondrial rRNA (16S mt-rRNA). Forms a regulatory protein-RNA complex, consisting of RCC1L, NGRN, RPUSD3, RPUSD4, TRUB2, FASTKD2 and 16S mt-rRNA. As to expression, expression detected in spleen, thymus, testis, ovary, colon, heart, smooth muscle, kidney, brain, lung, liver and white adipose tissue with highest expression in heart, smooth muscle and thyroid.

The protein localises to the mitochondrion matrix. Its subcellular location is the mitochondrion nucleoid. Plays an important role in assembly of the mitochondrial large ribosomal subunit. As a component of a functional protein-RNA module, consisting of RCC1L, NGRN, RPUSD3, RPUSD4, TRUB2, FASTKD2 and 16S mitochondrial ribosomal RNA (16S mt-rRNA), controls 16S mt-rRNA abundance and is required for intra-mitochondrial translation. May play a role in mitochondrial apoptosis. In Homo sapiens (Human), this protein is FAST kinase domain-containing protein 2, mitochondrial.